A 145-amino-acid polypeptide reads, in one-letter code: Ribosome maturation factor RimP (145 aa).

The protein belongs to the RimP family.

It is found in the cytoplasm. In terms of biological role, required for maturation of 30S ribosomal subunits. The protein is Ribosome maturation factor RimP of Borreliella afzelii (strain PKo) (Borrelia afzelii).